Reading from the N-terminus, the 148-residue chain is Large ribosomal subunit protein bL9 (148 aa).

This sequence belongs to the bacterial ribosomal protein bL9 family.

Functionally, binds to the 23S rRNA. The polypeptide is Large ribosomal subunit protein bL9 (Ectopseudomonas mendocina (strain ymp) (Pseudomonas mendocina)).